The chain runs to 293 residues: NAD kinase (293 aa).

Asp72 (proton acceptor) is an active-site residue. NAD(+)-binding positions include 72 to 73 (DG), 146 to 147 (ND), Arg157, Arg174, Asp176, 187 to 192 (TAYALS), and Gln247.

This sequence belongs to the NAD kinase family. The cofactor is a divalent metal cation.

The protein localises to the cytoplasm. It carries out the reaction NAD(+) + ATP = ADP + NADP(+) + H(+). Functionally, involved in the regulation of the intracellular balance of NAD and NADP, and is a key enzyme in the biosynthesis of NADP. Catalyzes specifically the phosphorylation on 2'-hydroxyl of the adenosine moiety of NAD to yield NADP. The sequence is that of NAD kinase from Teredinibacter turnerae (strain ATCC 39867 / T7901).